Consider the following 573-residue polypeptide: Urease subunit alpha 1 (573 aa).

The region spanning glycine 136–phenylalanine 573 is the Urease domain. Residues histidine 141, histidine 143, and lysine 224 each coordinate Ni(2+). At lysine 224 the chain carries N6-carboxylysine. Histidine 226 contributes to the substrate binding site. Ni(2+) is bound by residues histidine 253 and histidine 279. Residue histidine 327 is the Proton donor of the active site. Aspartate 367 is a binding site for Ni(2+).

Belongs to the metallo-dependent hydrolases superfamily. Urease alpha subunit family. As to quaternary structure, may form a heterohexamer of 3 UreC (alpha) and 3 UreAB (gamma/beta) subunits. May also form a heterotrimer of UreA (gamma), UreB (beta) and UreC (alpha) subunits. Three heterotrimers associate to form the active enzyme. It depends on Ni cation as a cofactor. Carboxylation allows a single lysine to coordinate two nickel ions.

It localises to the cytoplasm. It catalyses the reaction urea + 2 H2O + H(+) = hydrogencarbonate + 2 NH4(+). It participates in nitrogen metabolism; urea degradation; CO(2) and NH(3) from urea (urease route): step 1/1. The polypeptide is Urease subunit alpha 1 (Streptomyces coelicolor (strain ATCC BAA-471 / A3(2) / M145)).